The chain runs to 587 residues: Glutaconyl-CoA decarboxylase subunit alpha (587 aa).

Residues 31–298 (LKKIEEEIHQ…YDPEFFRVDD (268 aa)) enclose the CoA carboxyltransferase N-terminal domain. A carboxyltransferase region spans residues 31–558 (LKKIEEEIHQ…RGYVEAFTEA (528 aa)). One can recognise a CoA carboxyltransferase C-terminal domain in the interval 295–558 (RVDDPKAPAF…RGYVEAFTEA (264 aa)).

Heterooctamer consisting of two alpha, two beta, two gamma and two delta subunits.

It catalyses the reaction (2E)-glutaconyl-CoA + Na(+)(in) + H(+) = (2E)-butenoyl-CoA + Na(+)(out) + CO2. Its pathway is amino-acid degradation; L-glutamate degradation via hydroxyglutarate pathway; crotonoyl-CoA from L-glutamate: step 5/5. Functionally, decarboxylase subunit of the primary sodium pump glutaconyl-CoA decarboxylase (GCD). The polypeptide is Glutaconyl-CoA decarboxylase subunit alpha (gcdA) (Acidaminococcus fermentans (strain ATCC 25085 / DSM 20731 / CCUG 9996 / CIP 106432 / VR4)).